The following is a 67-amino-acid chain: Small ribosomal subunit protein eS31 (67 aa).

Residues Cys31, Cys34, Cys49, and Cys52 each contribute to the Zn(2+) site. The C4-type zinc finger occupies 31–52 (CPKCGAGVFMAEHLNRFACGKC).

This sequence belongs to the eukaryotic ribosomal protein eS31 family. Part of the 30S ribosomal subunit. Zn(2+) serves as cofactor.

This chain is Small ribosomal subunit protein eS31, found in Methanococcus maripaludis (strain DSM 14266 / JCM 13030 / NBRC 101832 / S2 / LL).